We begin with the raw amino-acid sequence, 478 residues long: Glycogen synthase (478 aa).

Position 15 (K15) interacts with ADP-alpha-D-glucose.

Belongs to the glycosyltransferase 1 family. Bacterial/plant glycogen synthase subfamily.

The catalysed reaction is [(1-&gt;4)-alpha-D-glucosyl](n) + ADP-alpha-D-glucose = [(1-&gt;4)-alpha-D-glucosyl](n+1) + ADP + H(+). Its pathway is glycan biosynthesis; glycogen biosynthesis. Its function is as follows. Synthesizes alpha-1,4-glucan chains using ADP-glucose. This is Glycogen synthase from Acholeplasma laidlawii (strain PG-8A).